The following is a 363-amino-acid chain: Flagellar P-ring protein (363 aa).

A signal peptide spans 1–20; the sequence is MKIKVLLAVALLAMTVPVKA.

This sequence belongs to the FlgI family. As to quaternary structure, the basal body constitutes a major portion of the flagellar organelle and consists of four rings (L,P,S, and M) mounted on a central rod.

The protein localises to the periplasm. It localises to the bacterial flagellum basal body. Its function is as follows. Assembles around the rod to form the L-ring and probably protects the motor/basal body from shearing forces during rotation. This chain is Flagellar P-ring protein, found in Shewanella amazonensis (strain ATCC BAA-1098 / SB2B).